A 470-amino-acid chain; its full sequence is Glutamate--tRNA ligase (470 aa).

Positions 12–22 (PSPTGIFHVGG) match the 'HIGH' region motif. Zn(2+) contacts are provided by Cys103, Cys105, Cys125, and Asp127. Positions 236–240 (KLSKR) match the 'KMSKS' region motif. Lys239 serves as a coordination point for ATP.

This sequence belongs to the class-I aminoacyl-tRNA synthetase family. Glutamate--tRNA ligase type 1 subfamily. In terms of assembly, monomer. Zn(2+) serves as cofactor.

The protein localises to the cytoplasm. The catalysed reaction is tRNA(Glu) + L-glutamate + ATP = L-glutamyl-tRNA(Glu) + AMP + diphosphate. Functionally, catalyzes the attachment of glutamate to tRNA(Glu) in a two-step reaction: glutamate is first activated by ATP to form Glu-AMP and then transferred to the acceptor end of tRNA(Glu). This is Glutamate--tRNA ligase from Frankia casuarinae (strain DSM 45818 / CECT 9043 / HFP020203 / CcI3).